Consider the following 1055-residue polypeptide: Kinesin-like protein KIN-7D, mitochondrial (1055 aa).

Residues 1–23 (MASSSSRTRSSRPPSPASSTSSS) show a composition bias toward low complexity. The segment at 1 to 36 (MASSSSRTRSSRPPSPASSTSSSHLSNRLIPRSNST) is disordered. The N-terminal 96 residues, 1 to 96 (MASSSSRTRS…PMDDTISSER (96 aa)), are a transit peptide targeting the mitochondrion. In terms of domain architecture, Kinesin motor spans 98–415 (SISVTVRFRP…LKFASRAKSI (318 aa)). Residue 178 to 185 (GVTSSGKT) participates in ATP binding. Coiled coils occupy residues 419–503 (ASRN…ILVS), 618–653 (PENS…GEAS), and 694–823 (LQEK…LAQT). Residues 826–856 (PMNGVNRKYNDGARSGRKGRISSSRSSGDEF) are disordered. The stretch at 880–911 (LESALAEKEFIEDEYRKKAEEAKRREEALEND) forms a coiled coil. The segment at 926-963 (NGALPEPNGTDPGRELEKSQSHAVLKERQVSSAPRQPE) is disordered. Residues 937–954 (PGRELEKSQSHAVLKERQ) show a composition bias toward basic and acidic residues. The RING-type zinc finger occupies 1008-1043 (CKVCFESPTAAILLPCRHFCLCKSCSLACSECPICR).

Belongs to the TRAFAC class myosin-kinesin ATPase superfamily. Kinesin family. KIN-7 subfamily.

It is found in the mitochondrion. This chain is Kinesin-like protein KIN-7D, mitochondrial, found in Arabidopsis thaliana (Mouse-ear cress).